Reading from the N-terminus, the 248-residue chain is 2,3-bisphosphoglycerate-dependent phosphoglycerate mutase (248 aa).

Residues 9–16 (RHGHSEWN), 22–23 (TG), R61, 88–91 (ERHY), K99, 115–116 (RR), and 183–184 (GN) contribute to the substrate site. Catalysis depends on H10, which acts as the Tele-phosphohistidine intermediate. The active-site Proton donor/acceptor is E88.

Belongs to the phosphoglycerate mutase family. BPG-dependent PGAM subfamily.

The enzyme catalyses (2R)-2-phosphoglycerate = (2R)-3-phosphoglycerate. The protein operates within carbohydrate degradation; glycolysis; pyruvate from D-glyceraldehyde 3-phosphate: step 3/5. Catalyzes the interconversion of 2-phosphoglycerate and 3-phosphoglycerate. The polypeptide is 2,3-bisphosphoglycerate-dependent phosphoglycerate mutase (Arthrobacter sp. (strain FB24)).